Consider the following 389-residue polypeptide: Phosphopentomutase (389 aa).

The Mn(2+) site is built by aspartate 9, aspartate 282, histidine 287, aspartate 323, histidine 324, and histidine 335.

It belongs to the phosphopentomutase family. Requires Mn(2+) as cofactor.

Its subcellular location is the cytoplasm. The enzyme catalyses 2-deoxy-alpha-D-ribose 1-phosphate = 2-deoxy-D-ribose 5-phosphate. It catalyses the reaction alpha-D-ribose 1-phosphate = D-ribose 5-phosphate. It functions in the pathway carbohydrate degradation; 2-deoxy-D-ribose 1-phosphate degradation; D-glyceraldehyde 3-phosphate and acetaldehyde from 2-deoxy-alpha-D-ribose 1-phosphate: step 1/2. Its function is as follows. Isomerase that catalyzes the conversion of deoxy-ribose 1-phosphate (dRib-1-P) and ribose 1-phosphate (Rib-1-P) to deoxy-ribose 5-phosphate (dRib-5-P) and ribose 5-phosphate (Rib-5-P), respectively. The polypeptide is Phosphopentomutase (Kosmotoga olearia (strain ATCC BAA-1733 / DSM 21960 / TBF 19.5.1)).